The following is a 164-amino-acid chain: Transmembrane protein 234 (164 aa).

Helical transmembrane passes span 1–21, 82–102, and 112–132; these read MAASLGQVLALVLVAALWGGT, LAVPICNSLAIIFTLIVGKAL, and VAGMVLTVIGISLCITSSVPW.

This sequence belongs to the TMEM234 family.

It is found in the membrane. This Homo sapiens (Human) protein is Transmembrane protein 234 (TMEM234).